The following is a 446-amino-acid chain: T-box transcription factor TBX19 (446 aa).

Residues 43 to 216 (LEDAPLWQRF…YNPFAKAFLD (174 aa)) constitute a DNA-binding region (T-box).

The protein localises to the nucleus. Functionally, transcriptional regulator involved in developmental processes. Can activate POMC gene expression and repress the alpha glycoprotein subunit and thyroid-stimulating hormone beta promoters. In Mus musculus (Mouse), this protein is T-box transcription factor TBX19.